Here is a 339-residue protein sequence, read N- to C-terminus: Heat-inducible transcription repressor HrcA (339 aa).

This sequence belongs to the HrcA family.

Negative regulator of class I heat shock genes (grpE-dnaK-dnaJ and groELS operons). Prevents heat-shock induction of these operons. The polypeptide is Heat-inducible transcription repressor HrcA (Clostridium perfringens (strain 13 / Type A)).